A 173-amino-acid chain; its full sequence is Non-classical export protein 2 (173 aa).

The Cytoplasmic portion of the chain corresponds to 1 to 10; sequence MLALADNILR. The helical transmembrane segment at 11 to 30 threads the bilayer; the sequence is IINFLFLVISIGLISSLLNT. Topologically, residues 31 to 37 are extracellular; the sequence is QHRHSSR. A helical transmembrane segment spans residues 38–62; it reads VNYCMFACAYGIFTDSLYGVFANFI. At 63–75 the chain is on the cytoplasmic side; the sequence is EPLAWPLVLFTLD. The chain crosses the membrane as a helical span at residues 76–93; sequence FLNFVFTFTAGTVLAVGI. Residues 94 to 137 are Extracellular-facing; sequence RAHSCNNSSYVDSNKITQGSGTRCRQAQAAVAFLYFSCAIFLAK. A helical membrane pass occupies residues 138–157; the sequence is TLMSVFNMISNGAFGSGSFS. Residues 158–173 are Cytoplasmic-facing; sequence KRRRTGQVGVPTISQV.

The protein belongs to the NCE102 family.

It is found in the cell membrane. Involved in membrane organization. Required for the formation of membrane compartments of CAN1 (MCCs), localization of CAN1 at the MCCs and subsequent invagination of the plasma membrane at the MCCs sites. Involved in eisosome organization and might act as a sensor of sphingolipids that regulates plasma membrane function. Involved in a novel pathway of export of proteins that lack a cleavable signal sequence. It may be an accessory subunit to an essential core component of the non-classical export machinery. Non-classical export pathway also functions as an alternative clearance/detoxification pathway to eliminate damaged material, when the basic repair pathway is not sufficient. The protein is Non-classical export protein 2 (NCE102) of Saccharomyces cerevisiae (strain ATCC 204508 / S288c) (Baker's yeast).